Here is a 383-residue protein sequence, read N- to C-terminus: E3 ubiquitin-protein ligase SPL2 (383 aa).

Over 1 to 14 the chain is Cytoplasmic; that stretch reads MSSPERALLNLLTD. A helical transmembrane segment spans residues 15–35; sequence IALSFDGAILGLTLAVSAVGS. Over 36–269 the chain is Chloroplast intermembrane; it reads ALKYASTNAA…MIEDLMEQTN (234 aa). A helical membrane pass occupies residues 270-290; that stretch reads FIFLGSVILGIVSVGILSYAA. Residues 291–383 lie on the Cytoplasmic side of the membrane; sequence VRTWNKWKQW…IRGSMRVYYS (93 aa). The RING-type zinc finger occupies 331 to 370; the sequence is CVICVSRRRVPAFIPCGHVVCCRRCASTVERELNPKCPVC.

The protein localises to the plastid. The protein resides in the chloroplast outer membrane. It catalyses the reaction S-ubiquitinyl-[E2 ubiquitin-conjugating enzyme]-L-cysteine + [acceptor protein]-L-lysine = [E2 ubiquitin-conjugating enzyme]-L-cysteine + N(6)-ubiquitinyl-[acceptor protein]-L-lysine.. It functions in the pathway protein modification; protein ubiquitination. In terms of biological role, possesses E3 ubiquitin-protein ligase activity. This is E3 ubiquitin-protein ligase SPL2 from Arabidopsis thaliana (Mouse-ear cress).